A 720-amino-acid polypeptide reads, in one-letter code: MADVNLPPSDSVDNRLPEKSTSSSPPPPPPSSSLPQQEQEQDQQQLPLRRERDSRERRDERDIERPPPNRRERDRSPLPPPRRDYKRRPSLSPPPPYRDRRHSPPQRRSPPQKRYRRDDNGYDGRRGSPRGGYGPPDRRFGYDHGGGYDREMGGRPGYGDERPHGRFMGRYQDWEGGRGGYGDASNSGNPQRDGLMSYKQFIQELEDDILPSEAERRYQEYKSEYITTQKRAFFNTHKEEDWLKNKYHPTNLLSVIERRNDLAQKVAKDFLLDLQSGTLDLGPAVTALNKSGRTSEPNSEDEAAGVGKRKRHGMGGAKENELLSAAPKAPSFTSDPKRILTDVEQTQALVRKLDSEKKIEENVLQGSETEKSGREKLHSGSTGPVVIIRGLTSVKGLEGVELLDTLVTYLWRVHGLDYYGKVETNEAKGLRHVRAEGKVSDAKGDENESKFDSHWQERLKGQDPLEVMAAKEKIDAAATEALDPHVRKIRDEKYGWKYGCGAKGCTKLFHAAEFVYKHLKLKHTELVTELTTKVREELYFQNYMNDPNAPGGQPATQQSGPRDRPIRRKPSMENRLRDDRGGRRERDGRANGNDRNDRSEDQQRGDNDGGNPGEVGYDAFGGQGGVHVPPFLSDINPPPMLMPVPGAGPLGPFVPAPPEVAMQMFRDPSGPNPPFEGSGRGGPAPFLLSPAFRQDPRRLRSYQDLDAPEEEVTVIDYRSL.

Disordered regions lie at residues 1-192 (MADV…NPQR), 288-335 (LNKS…FTSD), and 361-380 (ENVL…LHSG). Residues 33 to 47 (SLPQQEQEQDQQQLP) are compositionally biased toward low complexity. The span at 48 to 76 (LRRERDSRERRDERDIERPPPNRRERDRS) shows a compositional bias: basic and acidic residues. Residues Ser-76, Ser-90, and Ser-92 each carry the phosphoserine modification. Positions 99–115 (DRRHSPPQRRSPPQKRY) are enriched in basic residues. 2 stretches are compositionally biased toward basic and acidic residues: residues 116-126 (RRDDNGYDGRR) and 136-164 (PDRR…ERPH). A compositionally biased stretch (polar residues) spans 288 to 297 (LNKSGRTSEP). Residues 368-378 (ETEKSGREKLH) show a composition bias toward basic and acidic residues. The C2H2-type zinc-finger motif lies at 498-523 (YGCGAKGCTKLFHAAEFVYKHLKLKH). 2 disordered regions span residues 543–622 (YMND…AFGG) and 666–687 (RDPS…APFL). Residues 570–607 (PSMENRLRDDRGGRRERDGRANGNDRNDRSEDQQRGDN) are compositionally biased toward basic and acidic residues. Residues 608-622 (DGGNPGEVGYDAFGG) show a composition bias toward gly residues. Ser-689 is modified (phosphoserine).

This sequence belongs to the ARS2 family. As to quaternary structure, interacts with HYL1. Interacts with RCF3, RS40 and RS41. As to expression, expressed in shoot meristems and in emerging organ primordia throughout development.

The protein localises to the nucleus. The protein resides in the nucleus speckle. In terms of biological role, acts as a mediator between the cap-binding complex (CBC) and both the pre-mRNA splicing and primary microRNAs (miRNAs) processing machinery. Required for proper processing of primary miRNAs to miRNAs, thereby playing a role in RNA-mediated gene silencing (RNAi) by miRNAs. Does not participate in sense post-transcriptional gene silencing. Acts as a regulator of meristem activity and adaxial leaf fate via the miRNA gene-silencing pathway by regulating the expression of PHB and by limiting the competence of shoot tissue to respond to KNOX expression. Its function is however not limited to miRNA-mediated repression of leaf polarity genes, but rather acts as a general regulator of primary microRNAs processing. Also critical for the accumulation of the trans-acting small interfering RNA (ta-siRNA). Required for pre-mRNA splicing. In Arabidopsis thaliana (Mouse-ear cress), this protein is Serrate RNA effector molecule (SE).